A 188-amino-acid chain; its full sequence is Methylamine dehydrogenase light chain (188 aa).

The tat-type signal signal peptide spans 1–57; it reads MLGNFRFDDMVEKLSRRVAGQTSRRSVIGKLGTAMLGIGLVPLLPVDRRGRVSRANA. Intrachain disulfides connect Cys-80–Cys-145, Cys-86–Cys-118, Cys-93–Cys-178, Cys-95–Cys-143, Cys-103–Cys-134, and Cys-135–Cys-166. Position 114 is a tryptophylquinone (Trp-114). Positions 114-165 form a cross-link, tryptophan tryptophylquinone (Trp-Trp); it reads WVASCYNPTDGQSYLIAYRDCCGYNVSGRCPCLNTEGELPVYRPEFANDIIW.

Belongs to the aromatic amine dehydrogenase light chain family. In terms of assembly, heterotetramer of two light and two heavy chains. The cofactor is tryptophan tryptophylquinone residue. Post-translationally, predicted to be exported by the Tat system. The position of the signal peptide cleavage has not been experimentally proven. In terms of processing, tryptophan tryptophylquinone (TTQ) is formed by oxidation of the indole ring of a tryptophan to form tryptophylquinone followed by covalent cross-linking with another tryptophan residue.

It localises to the periplasm. The enzyme catalyses 2 oxidized [amicyanin] + methylamine + H2O = 2 reduced [amicyanin] + formaldehyde + NH4(+) + 2 H(+). Its pathway is one-carbon metabolism; methylamine degradation; formaldehyde from methylamine: step 1/1. Methylamine dehydrogenase carries out the oxidation of methylamine. Electrons are passed from methylamine dehydrogenase to amicyanin. This is Methylamine dehydrogenase light chain (mauA) from Paracoccus denitrificans.